An 86-amino-acid polypeptide reads, in one-letter code: Large ribosomal subunit protein bL27 (86 aa).

Residues 1–24 form a disordered region; it reads MAHKKGTGSTRNGRDSNSKRLGVK.

Belongs to the bacterial ribosomal protein bL27 family.

This is Large ribosomal subunit protein bL27 from Prochlorococcus marinus (strain MIT 9312).